The following is a 154-amino-acid chain: Histone H2B.5 (154 aa).

Positions 1 to 25 are enriched in basic and acidic residues; sequence MAPKAEKKPAAKKVAEEEPSEKAAP. Residues 1-62 form a disordered region; it reads MAPKAEKKPA…DKKGRKKAKK (62 aa). N6-acetyllysine occurs at positions 7 and 39. A Glycyl lysine isopeptide (Lys-Gly) (interchain with G-Cter in ubiquitin) cross-link involves residue K150.

This sequence belongs to the histone H2B family. In terms of assembly, the nucleosome is a histone octamer containing two molecules each of H2A, H2B, H3 and H4 assembled in one H3-H4 heterotetramer and two H2A-H2B heterodimers. The octamer wraps approximately 147 bp of DNA. Post-translationally, can be acetylated to form H2BK6ac and H2BK33ac. Monoubiquitinated to form H2BK143ub1; may give a specific tag for epigenetic transcriptional activation.

It localises to the nucleus. The protein resides in the chromosome. Functionally, core component of nucleosome. Nucleosomes wrap and compact DNA into chromatin, limiting DNA accessibility to the cellular machineries which require DNA as a template. Histones thereby play a central role in transcription regulation, DNA repair, DNA replication and chromosomal stability. DNA accessibility is regulated via a complex set of post-translational modifications of histones, also called histone code, and nucleosome remodeling. The chain is Histone H2B.5 from Zea mays (Maize).